We begin with the raw amino-acid sequence, 482 residues long: tRNA sulfurtransferase (482 aa).

Residues 61 to 165 (LAIRDALTRI…DDRLLLIKGR (105 aa)) form the THUMP domain. ATP contacts are provided by residues 183–184 (LI), Lys-265, Gly-287, and Gln-296. A disulfide bridge links Cys-344 with Cys-456. Positions 404–482 (FGPNDVILDI…GFQNVKVYRP (79 aa)) constitute a Rhodanese domain. Cys-456 functions as the Cysteine persulfide intermediate in the catalytic mechanism.

It belongs to the ThiI family.

Its subcellular location is the cytoplasm. It carries out the reaction [ThiI sulfur-carrier protein]-S-sulfanyl-L-cysteine + a uridine in tRNA + 2 reduced [2Fe-2S]-[ferredoxin] + ATP + H(+) = [ThiI sulfur-carrier protein]-L-cysteine + a 4-thiouridine in tRNA + 2 oxidized [2Fe-2S]-[ferredoxin] + AMP + diphosphate. The enzyme catalyses [ThiS sulfur-carrier protein]-C-terminal Gly-Gly-AMP + S-sulfanyl-L-cysteinyl-[cysteine desulfurase] + AH2 = [ThiS sulfur-carrier protein]-C-terminal-Gly-aminoethanethioate + L-cysteinyl-[cysteine desulfurase] + A + AMP + 2 H(+). The protein operates within cofactor biosynthesis; thiamine diphosphate biosynthesis. Functionally, catalyzes the ATP-dependent transfer of a sulfur to tRNA to produce 4-thiouridine in position 8 of tRNAs, which functions as a near-UV photosensor. Also catalyzes the transfer of sulfur to the sulfur carrier protein ThiS, forming ThiS-thiocarboxylate. This is a step in the synthesis of thiazole, in the thiamine biosynthesis pathway. The sulfur is donated as persulfide by IscS. This chain is tRNA sulfurtransferase, found in Citrobacter koseri (strain ATCC BAA-895 / CDC 4225-83 / SGSC4696).